Here is a 269-residue protein sequence, read N- to C-terminus: Tryptophan synthase alpha chain (269 aa).

Catalysis depends on proton acceptor residues Glu56 and Asp67.

The protein belongs to the TrpA family. As to quaternary structure, tetramer of two alpha and two beta chains.

The catalysed reaction is (1S,2R)-1-C-(indol-3-yl)glycerol 3-phosphate + L-serine = D-glyceraldehyde 3-phosphate + L-tryptophan + H2O. The protein operates within amino-acid biosynthesis; L-tryptophan biosynthesis; L-tryptophan from chorismate: step 5/5. In terms of biological role, the alpha subunit is responsible for the aldol cleavage of indoleglycerol phosphate to indole and glyceraldehyde 3-phosphate. This Mycobacterium marinum (strain ATCC BAA-535 / M) protein is Tryptophan synthase alpha chain.